A 638-amino-acid chain; its full sequence is Zinc finger protein 143 (638 aa).

At methionine 1 the chain carries N-acetylmethionine. Lysine 213 is covalently cross-linked (Glycyl lysine isopeptide (Lys-Gly) (interchain with G-Cter in SUMO2)). 4 consecutive C2H2-type zinc fingers follow at residues phenylalanine 237–histidine 261, tyrosine 267–histidine 291, tyrosine 297–histidine 321, and phenylalanine 327–histidine 351. Threonine 352 is modified (phosphothreonine). 3 consecutive C2H2-type zinc fingers follow at residues tyrosine 357 to histidine 381, tyrosine 387 to histidine 411, and tyrosine 417 to histidine 440. Residue lysine 406 forms a Glycyl lysine isopeptide (Lys-Gly) (interchain with G-Cter in SUMO2) linkage.

It belongs to the GLI C2H2-type zinc-finger protein family. In terms of assembly, interacts with CHD8. Forms a complex with HCFC1 and ZNF143.

The protein resides in the nucleus. Its function is as follows. Transcriptional activator. In complex with HCFC1 and ZNF143, regulates the expression of several genes, including AP2S1, ESCO2, OPHN1, RBL1, UBXN8 and ZNF32. Activates the gene for selenocysteine tRNA (tRNAsec). Binds to the SPH motif of small nuclear RNA (snRNA) gene promoters. Participates in efficient U6 RNA polymerase III transcription via its interaction with CHD8. The protein is Zinc finger protein 143 (Znf143) of Rattus norvegicus (Rat).